The sequence spans 579 residues: V-type ATP synthase alpha chain (579 aa).

Residue 227 to 234 (GGFGTGKT) coordinates ATP.

Belongs to the ATPase alpha/beta chains family.

It carries out the reaction ATP + H2O + 4 H(+)(in) = ADP + phosphate + 5 H(+)(out). Its function is as follows. Produces ATP from ADP in the presence of a proton gradient across the membrane. The V-type alpha chain is a catalytic subunit. This Anaeromyxobacter dehalogenans (strain 2CP-C) protein is V-type ATP synthase alpha chain.